The following is a 205-amino-acid chain: Small ribosomal subunit protein uS4 (205 aa).

The S4 RNA-binding domain occupies 94-157; the sequence is SRLDAVVYRA…RNLALVLEAL (64 aa).

The protein belongs to the universal ribosomal protein uS4 family. Part of the 30S ribosomal subunit. Contacts protein S5. The interaction surface between S4 and S5 is involved in control of translational fidelity.

Its function is as follows. One of the primary rRNA binding proteins, it binds directly to 16S rRNA where it nucleates assembly of the body of the 30S subunit. With S5 and S12 plays an important role in translational accuracy. The chain is Small ribosomal subunit protein uS4 from Hyphomonas neptunium (strain ATCC 15444).